The following is a 305-amino-acid chain: Mas-related G-protein coupled receptor member A8 (305 aa).

Topologically, residues 1–17 (MDKTILGSIDIETLIRH) are extracellular. Residues 18-38 (LMIIIFGLVGLTGNAIVFWLL) traverse the membrane as a helical segment. Residues 39–46 (GFHLHRNA) lie on the Cytoplasmic side of the membrane. The helical transmembrane segment at 47-67 (FLVYILNLALADFFYLLCHII) threads the bilayer. The Extracellular portion of the chain corresponds to 68–85 (NSIMFLLKVPSPNIILDH). Residues 86-106 (CFYTIMIVLYITGLSMLSAIS) traverse the membrane as a helical segment. Residues 107-129 (TERCLSVLCPIWYRCHRPEHTST) are Cytoplasmic-facing. Residues 130–150 (AMCAVIWVMSLLISILNGYFC) traverse the membrane as a helical segment. Residues Asn151 and Asn159 are each glycosylated (N-linked (GlcNAc...) asparagine). The Extracellular portion of the chain corresponds to 151-172 (NFSSPKYVNNSVCQASDIFIRT). The chain crosses the membrane as a helical span at residues 173–193 (YPIFLFVLLCLSTLALLARLF). Topologically, residues 194-207 (SGAGKRKFTRLFVT) are cytoplasmic. The helical transmembrane segment at 208–228 (IMLAILVFLLCGLPLGFFWFL) threads the bilayer. The Extracellular segment spans residues 229–243 (SPWIEDRFIVLDYRL). Residues 244 to 264 (FFASVVLTVVNSCANPIIYFF) form a helical membrane-spanning segment. Over 265–305 (VGSFRHRLKQQTLKMFLQRALQDTPETPENMVEMSRSKAEP) the chain is Cytoplasmic.

This sequence belongs to the G-protein coupled receptor 1 family. Mas subfamily. In terms of tissue distribution, expressed in a subset of sensory neurons that includes nociceptors. Expressed in the subclass of non-peptidergic sensory neurons that are IB4(+) and VR1(-).

The protein localises to the cell membrane. In terms of biological role, orphan receptor. May be a receptor for RFamide-family neuropeptides such as NPFF and NPAF, which are analgesic in vivo. May regulate nociceptor function and/or development, including the sensation or modulation of pain. The protein is Mas-related G-protein coupled receptor member A8 (Mrgpra8) of Mus musculus (Mouse).